The chain runs to 482 residues: Abscisic acid 8'-hydroxylase 2 (482 aa).

The chain crosses the membrane as a helical span at residues 20–40 (PALITLTIVVVVVVLLFKWWL). Heme is bound at residue Cys431.

This sequence belongs to the cytochrome P450 family. Requires heme as cofactor. Mainly expressed in dry seeds. Lower expression in rosette leaves, flowers, siliques and stems. Not expressed in roots. Expressed in both endosperm and vascular tissues of embryo during the seed development and in cortex and endodermis in germinating embryo.

The protein localises to the membrane. The catalysed reaction is 2-cis-(+)-abscisate + reduced [NADPH--hemoprotein reductase] + O2 = (+)-8'-hydroxyabscisate + oxidized [NADPH--hemoprotein reductase] + H2O + H(+). It functions in the pathway plant hormone degradation; abscisic acid degradation. Involved in the oxidative degradation of abscisic acid, but not in the isomerization of the produced 8'-hydroxyabscisic acid (8'-OH-ABA) to (-)-phaseic acid (PA). Involved in the control of seed dormancy and germination. The chain is Abscisic acid 8'-hydroxylase 2 (CYP707A2) from Arabidopsis thaliana (Mouse-ear cress).